We begin with the raw amino-acid sequence, 320 residues long: Calnexin-independence factor 1 (320 aa).

The disordered stretch occupies residues 16-36; the sequence is SAETSVGEKQPKRKRSEVRAE.

It localises to the nucleus. The protein resides in the nucleolus. Induces a stably inheritable state of calnexin independence called the Cin state when overexpressed. The chain is Calnexin-independence factor 1 (cif1) from Schizosaccharomyces pombe (strain 972 / ATCC 24843) (Fission yeast).